The chain runs to 229 residues: Uracil-DNA glycosylase (229 aa).

Asp67 (proton acceptor) is an active-site residue.

It belongs to the uracil-DNA glycosylase (UDG) superfamily. UNG family.

Its subcellular location is the cytoplasm. The enzyme catalyses Hydrolyzes single-stranded DNA or mismatched double-stranded DNA and polynucleotides, releasing free uracil.. In terms of biological role, excises uracil residues from the DNA which can arise as a result of misincorporation of dUMP residues by DNA polymerase or due to deamination of cytosine. This chain is Uracil-DNA glycosylase, found in Coxiella burnetii (strain RSA 493 / Nine Mile phase I).